The chain runs to 272 residues: Phosphate import ATP-binding protein PstB 1 (272 aa).

The ABC transporter domain occupies 26–267 (ITIENLDLHY…PMKKQTEDYI (242 aa)). Residue 58 to 65 (GPSGCGKS) participates in ATP binding.

Belongs to the ABC transporter superfamily. Phosphate importer (TC 3.A.1.7) family. The complex is composed of two ATP-binding proteins (PstB), two transmembrane proteins (PstC and PstA) and a solute-binding protein (PstS).

The protein resides in the cell inner membrane. The enzyme catalyses phosphate(out) + ATP + H2O = ADP + 2 phosphate(in) + H(+). Functionally, part of the ABC transporter complex PstSACB involved in phosphate import. Responsible for energy coupling to the transport system. The chain is Phosphate import ATP-binding protein PstB 1 from Vibrio vulnificus (strain YJ016).